Consider the following 369-residue polypeptide: Flagellar P-ring protein (369 aa).

An N-terminal signal peptide occupies residues 1-23 (MRSLLRWMGVLLLCGLCAAPAQA).

Belongs to the FlgI family. In terms of assembly, the basal body constitutes a major portion of the flagellar organelle and consists of four rings (L,P,S, and M) mounted on a central rod.

The protein resides in the periplasm. It localises to the bacterial flagellum basal body. In terms of biological role, assembles around the rod to form the L-ring and probably protects the motor/basal body from shearing forces during rotation. This chain is Flagellar P-ring protein, found in Chromohalobacter salexigens (strain ATCC BAA-138 / DSM 3043 / CIP 106854 / NCIMB 13768 / 1H11).